The primary structure comprises 310 residues: Ribosomal RNA small subunit methyltransferase H (310 aa).

S-adenosyl-L-methionine contacts are provided by residues 47–49 (GGH), D66, F93, D108, and Q115. Positions 275–310 (RKPFMASEQEQADNPRSRSAKLRIARRRPDTARSGP) are disordered. A compositionally biased stretch (basic and acidic residues) spans 301–310 (RRPDTARSGP).

It belongs to the methyltransferase superfamily. RsmH family.

It is found in the cytoplasm. It catalyses the reaction cytidine(1402) in 16S rRNA + S-adenosyl-L-methionine = N(4)-methylcytidine(1402) in 16S rRNA + S-adenosyl-L-homocysteine + H(+). In terms of biological role, specifically methylates the N4 position of cytidine in position 1402 (C1402) of 16S rRNA. This Synechococcus sp. (strain CC9311) protein is Ribosomal RNA small subunit methyltransferase H.